The following is a 301-amino-acid chain: Heme A synthase (301 aa).

Residues Met1–Leu5 are Cytoplasmic-facing. The chain crosses the membrane as a helical span at residues Ala6–Val26. The Extracellular portion of the chain corresponds to Thr27 to Arg62. Cysteines 35 and 42 form a disulfide. The active site involves Glu58. His61 serves as a coordination point for heme o. A helical transmembrane segment spans residues Val63 to Val83. Topologically, residues Lys84 to Lys90 are cytoplasmic. A helical transmembrane segment spans residues Ile91–Val111. Topologically, residues Ile112–Ala121 are extracellular. The helical transmembrane segment at Leu122 to Phe142 threads the bilayer. His123 is a heme o binding site. At Glu143–His158 the chain is on the cytoplasmic side. Residues Leu159 to Leu179 form a helical membrane-spanning segment. The Extracellular portion of the chain corresponds to Gly180–Gln203. A disulfide bridge links Cys185 with Cys191. A helical transmembrane segment spans residues Met204–Ala224. His206 serves as a coordination point for heme b. Residues Arg225 to Arg234 are Cytoplasmic-facing. Residues Gly235–Leu255 traverse the membrane as a helical segment. The Extracellular segment spans residues Gly256 to Ala259. Residues Thr260–Leu280 traverse the membrane as a helical segment. Residue His266 participates in heme b binding. Residues Ser281–Gly301 lie on the Cytoplasmic side of the membrane.

The protein belongs to the COX15/CtaA family. Type 1 subfamily. In terms of assembly, interacts with CtaB. Heme b serves as cofactor.

The protein localises to the cell membrane. The enzyme catalyses Fe(II)-heme o + 2 A + H2O = Fe(II)-heme a + 2 AH2. The protein operates within porphyrin-containing compound metabolism; heme A biosynthesis; heme A from heme O: step 1/1. In terms of biological role, catalyzes the conversion of heme O to heme A by two successive hydroxylations of the methyl group at C8. The first hydroxylation forms heme I, the second hydroxylation results in an unstable dihydroxymethyl group, which spontaneously dehydrates, resulting in the formyl group of heme A. The sequence is that of Heme A synthase from Exiguobacterium sp. (strain ATCC BAA-1283 / AT1b).